The primary structure comprises 102 residues: Death-associated protein 1 (102 aa).

The interval methionine 1–lysine 102 is disordered. The residue at position 2 (serine 2) is an N-acetylserine. The residue at position 3 (serine 3) is a Phosphoserine; by MTOR. At lysine 29 the chain carries N6-acetyllysine. The segment covering histidine 32–aspartate 43 has biased composition (basic and acidic residues). Serine 49 bears the Phosphoserine mark. A Phosphoserine; by MTOR modification is found at serine 51. Residue serine 91 is modified to Phosphoserine. Polar residues predominate over residues proline 92–lysine 102.

This sequence belongs to the DAP-DAPL1 family. Associates with ribosomes; inhibiting translation. Interacts with eiF5a (EIF5A and EIF5A2); inhibiting translation. Phosphorylated. Phosphorylation by MTOR inhibits the suppressive activity of DAP toward autophagy.

Its function is as follows. Ribosome-binding protein involved in ribosome hibernation, a process during which ribosomes are stabilized in an inactive state and preserved from proteasomal degradation. Acts via its association with eiF5a (EIF5A and EIF5A2) at the polypeptide exit tunnel of the ribosome, preventing mRNA translation. Involved in ribosome hibernation in the mature oocyte by preventing mRNA translation, leading to ribosome inactivation. Ribosomes, which are produced in large quantities during oogenesis, are stored and translationally repressed in the oocyte and early embryo. Also acts as a negative regulator of autophagy. Involved in mediating interferon-gamma-induced cell death. This is Death-associated protein 1 from Homo sapiens (Human).